We begin with the raw amino-acid sequence, 241 residues long: Transmembrane protein 176A (241 aa).

Ser-38 bears the Phosphoserine mark. 4 helical membrane-spanning segments follow: residues 65 to 85 (WVMQIVLGLLSGVLGGFLYIF), 93 to 113 (SGAPIWTGAVAVLAGAVAFIY), 127 to 147 (LLALAAFSTATAATIIGAGRF), and 193 to 213 (LFISINAMLLGVWVLLLLASL).

This sequence belongs to the TMEM176 family. As to quaternary structure, interacts with MCOLN2.

It is found in the membrane. This is Transmembrane protein 176A (TMEM176A) from Bos taurus (Bovine).